Here is a 224-residue protein sequence, read N- to C-terminus: Ribonuclease 3 (224 aa).

One can recognise an RNase III domain in the interval 4-126 (LDRLQHKIGY…IIGAMSLDSN (123 aa)). Position 39 (E39) interacts with Mg(2+). D43 is a catalytic residue. Mg(2+) is bound by residues D112 and E115. E115 is an active-site residue. The DRBM domain occupies 153-223 (DPKTRLQEYL…AEQILKVLDI (71 aa)).

The protein belongs to the ribonuclease III family. As to quaternary structure, homodimer. Mg(2+) is required as a cofactor.

It is found in the cytoplasm. It carries out the reaction Endonucleolytic cleavage to 5'-phosphomonoester.. Functionally, digests double-stranded RNA. Involved in the processing of primary rRNA transcript to yield the immediate precursors to the large and small rRNAs (23S and 16S). Processes some mRNAs, and tRNAs when they are encoded in the rRNA operon. Processes pre-crRNA and tracrRNA of type II CRISPR loci if present in the organism. The protein is Ribonuclease 3 of Actinobacillus succinogenes (strain ATCC 55618 / DSM 22257 / CCUG 43843 / 130Z).